The following is a 954-amino-acid chain: Mitogen-activated protein kinase kinase kinase 10 (954 aa).

The SH3 domain occupies 16–81 (PAGPVWTAVF…PSNYVAPGAP (66 aa)). The region spanning 98–360 (LQLEEIIGVG…GSILKRLEVI (263 aa)) is the Protein kinase domain. Residues 104 to 112 (IGVGGFGKV) and Lys-125 each bind ATP. Catalysis depends on Asp-222, which acts as the Proton acceptor. Phosphothreonine; by autocatalysis is present on Thr-258. Ser-262 carries the phosphoserine; by autocatalysis and MAP4K1 modification. Leucine-zipper stretches follow at residues 384-405 (IQHM…EEEL) and 419-440 (LRRR…ELHL). Disordered stretches follow at residues 490-665 (PTLD…RWGH), 716-739 (RFPR…PGLG), and 757-954 (STRS…HGSH). 3 positions are modified to phosphoserine: Ser-498, Ser-502, and Ser-506. Over residues 501-511 (ASPPASPSIIP) the composition is skewed to low complexity. Thr-558 carries the phosphothreonine modification. A compositionally biased stretch (basic and acidic residues) spans 566–578 (QKERVGGEERLKG). The span at 611–620 (EMEEFAEAED) shows a compositional bias: acidic residues. Residues 631-640 (STPSYLSVPL) show a composition bias toward low complexity. Residues 773-790 (APSPPPSPPAPTPTPSPS) are compositionally biased toward pro residues. Residue Arg-857 is modified to Omega-N-methylarginine. A compositionally biased stretch (pro residues) spans 913-927 (PSRPDTPESPGPPSV).

This sequence belongs to the protein kinase superfamily. STE Ser/Thr protein kinase family. MAP kinase kinase kinase subfamily. As to quaternary structure, homodimer. Interacts with SH3RF2. It depends on Mg(2+) as a cofactor. In terms of processing, autophosphorylation on serine and threonine residues within the activation loop plays a role in enzyme activation. Expressed in brain and skeletal muscle.

The enzyme catalyses L-seryl-[protein] + ATP = O-phospho-L-seryl-[protein] + ADP + H(+). It carries out the reaction L-threonyl-[protein] + ATP = O-phospho-L-threonyl-[protein] + ADP + H(+). Homodimerization via the leucine zipper domains is required for autophosphorylation and subsequent activation. Its function is as follows. Activates the JUN N-terminal pathway. The sequence is that of Mitogen-activated protein kinase kinase kinase 10 (MAP3K10) from Homo sapiens (Human).